Consider the following 256-residue polypeptide: DNA repair protein RecO (256 aa).

It belongs to the RecO family.

Its function is as follows. Involved in DNA repair and RecF pathway recombination. This chain is DNA repair protein RecO, found in Delftia acidovorans (strain DSM 14801 / SPH-1).